The following is a 183-amino-acid chain: NADH-quinone oxidoreductase subunit I (183 aa).

4Fe-4S ferredoxin-type domains follow at residues 71–100 and 117–146; these read KRDEQGRENCTACGLCALSCPAEAITMKAA and EIYEINMLRCIFCGLCEEACPKDAIYLTTS. 8 residues coordinate [4Fe-4S] cluster: cysteine 80, cysteine 83, cysteine 86, cysteine 90, cysteine 126, cysteine 129, cysteine 132, and cysteine 136.

It belongs to the complex I 23 kDa subunit family. In terms of assembly, NDH-1 is composed of 14 different subunits. Subunits NuoA, H, J, K, L, M, N constitute the membrane sector of the complex. It depends on [4Fe-4S] cluster as a cofactor.

It is found in the cell inner membrane. The enzyme catalyses a quinone + NADH + 5 H(+)(in) = a quinol + NAD(+) + 4 H(+)(out). Functionally, NDH-1 shuttles electrons from NADH, via FMN and iron-sulfur (Fe-S) centers, to quinones in the respiratory chain. The immediate electron acceptor for the enzyme in this species is believed to be ubiquinone. Couples the redox reaction to proton translocation (for every two electrons transferred, four hydrogen ions are translocated across the cytoplasmic membrane), and thus conserves the redox energy in a proton gradient. The sequence is that of NADH-quinone oxidoreductase subunit I from Flavobacterium psychrophilum (strain ATCC 49511 / DSM 21280 / CIP 103535 / JIP02/86).